The primary structure comprises 348 residues: Probable dual-specificity RNA methyltransferase RlmN (348 aa).

Catalysis depends on E93, which acts as the Proton acceptor. Residues 99–333 (TEKRLTACLS…VSLRKSRGSD (235 aa)) enclose the Radical SAM core domain. C106 and C338 are joined by a disulfide. 3 residues coordinate [4Fe-4S] cluster: C113, C117, and C120. Residues 160–161 (GE), S190, 219–221 (SLH), and N295 each bind S-adenosyl-L-methionine. The active-site S-methylcysteine intermediate is the C338.

The protein belongs to the radical SAM superfamily. RlmN family. [4Fe-4S] cluster serves as cofactor.

The protein resides in the cytoplasm. It carries out the reaction adenosine(2503) in 23S rRNA + 2 reduced [2Fe-2S]-[ferredoxin] + 2 S-adenosyl-L-methionine = 2-methyladenosine(2503) in 23S rRNA + 5'-deoxyadenosine + L-methionine + 2 oxidized [2Fe-2S]-[ferredoxin] + S-adenosyl-L-homocysteine. It catalyses the reaction adenosine(37) in tRNA + 2 reduced [2Fe-2S]-[ferredoxin] + 2 S-adenosyl-L-methionine = 2-methyladenosine(37) in tRNA + 5'-deoxyadenosine + L-methionine + 2 oxidized [2Fe-2S]-[ferredoxin] + S-adenosyl-L-homocysteine. Functionally, specifically methylates position 2 of adenine 2503 in 23S rRNA and position 2 of adenine 37 in tRNAs. This is Probable dual-specificity RNA methyltransferase RlmN from Prochlorococcus marinus (strain MIT 9515).